A 118-amino-acid polypeptide reads, in one-letter code: D-dopachrome decarboxylase (118 aa).

At Pro-2 the chain carries N-acetylproline. The residue at position 33 (Lys-33) is an N6-acetyllysine.

Belongs to the MIF family. As to quaternary structure, homotrimer. In terms of tissue distribution, highly expressed in the liver and at lower levels in the heart, lung and pancreas.

Its subcellular location is the cytoplasm. It catalyses the reaction D-dopachrome + H(+) = 5,6-dihydroxyindole + CO2. In terms of biological role, tautomerization of D-dopachrome with decarboxylation to give 5,6-dihydroxyindole (DHI). The protein is D-dopachrome decarboxylase (DDT) of Homo sapiens (Human).